The following is a 192-amino-acid chain: Pyridoxal 5'-phosphate synthase subunit PdxT (192 aa).

L-glutamine is bound at residue 50–52 (GES). Cys82 functions as the Nucleophile in the catalytic mechanism. Residues Arg109 and 136 to 137 (IR) each bind L-glutamine. Residues His172 and Glu174 each act as charge relay system in the active site.

It belongs to the glutaminase PdxT/SNO family. In terms of assembly, in the presence of PdxS, forms a dodecamer of heterodimers. Only shows activity in the heterodimer.

The catalysed reaction is aldehydo-D-ribose 5-phosphate + D-glyceraldehyde 3-phosphate + L-glutamine = pyridoxal 5'-phosphate + L-glutamate + phosphate + 3 H2O + H(+). It carries out the reaction L-glutamine + H2O = L-glutamate + NH4(+). The protein operates within cofactor biosynthesis; pyridoxal 5'-phosphate biosynthesis. Its function is as follows. Catalyzes the hydrolysis of glutamine to glutamate and ammonia as part of the biosynthesis of pyridoxal 5'-phosphate. The resulting ammonia molecule is channeled to the active site of PdxS. This chain is Pyridoxal 5'-phosphate synthase subunit PdxT, found in Haemophilus influenzae (strain PittGG).